Reading from the N-terminus, the 68-residue chain is DNA gyrase inhibitor YacG (68 aa).

Zn(2+) contacts are provided by cysteine 12, cysteine 15, cysteine 30, and cysteine 34. Residues 48 to 68 (KLKTQDAPTSGKGQHSDDYED) are disordered.

It belongs to the DNA gyrase inhibitor YacG family. In terms of assembly, interacts with GyrB. It depends on Zn(2+) as a cofactor.

Its function is as follows. Inhibits all the catalytic activities of DNA gyrase by preventing its interaction with DNA. Acts by binding directly to the C-terminal domain of GyrB, which probably disrupts DNA binding by the gyrase. The chain is DNA gyrase inhibitor YacG from Acinetobacter baylyi (strain ATCC 33305 / BD413 / ADP1).